The following is a 396-amino-acid chain: Tryptophan synthase beta chain (396 aa).

Residue Lys-86 is modified to N6-(pyridoxal phosphate)lysine.

Belongs to the TrpB family. In terms of assembly, tetramer of two alpha and two beta chains. The cofactor is pyridoxal 5'-phosphate.

The catalysed reaction is (1S,2R)-1-C-(indol-3-yl)glycerol 3-phosphate + L-serine = D-glyceraldehyde 3-phosphate + L-tryptophan + H2O. Its pathway is amino-acid biosynthesis; L-tryptophan biosynthesis; L-tryptophan from chorismate: step 5/5. The beta subunit is responsible for the synthesis of L-tryptophan from indole and L-serine. The sequence is that of Tryptophan synthase beta chain from Vibrio atlanticus (strain LGP32) (Vibrio splendidus (strain Mel32)).